We begin with the raw amino-acid sequence, 91 residues long: Probable Fe(2+)-trafficking protein (91 aa).

It belongs to the Fe(2+)-trafficking protein family.

Could be a mediator in iron transactions between iron acquisition and iron-requiring processes, such as synthesis and/or repair of Fe-S clusters in biosynthetic enzymes. The chain is Probable Fe(2+)-trafficking protein from Polynucleobacter necessarius subsp. necessarius (strain STIR1).